The following is a 329-amino-acid chain: Beta-ketoacyl-[acyl-carrier-protein] synthase III (329 aa).

Residues Cys113 and His255 contribute to the active site. The interval 256–260 (QANQR) is ACP-binding. Residue Asn285 is part of the active site.

The protein belongs to the thiolase-like superfamily. FabH family. In terms of assembly, homodimer.

It is found in the cytoplasm. The catalysed reaction is malonyl-[ACP] + acetyl-CoA + H(+) = 3-oxobutanoyl-[ACP] + CO2 + CoA. Its pathway is lipid metabolism; fatty acid biosynthesis. In terms of biological role, catalyzes the condensation reaction of fatty acid synthesis by the addition to an acyl acceptor of two carbons from malonyl-ACP. Catalyzes the first condensation reaction which initiates fatty acid synthesis and may therefore play a role in governing the total rate of fatty acid production. Possesses both acetoacetyl-ACP synthase and acetyl transacylase activities. Its substrate specificity determines the biosynthesis of branched-chain and/or straight-chain of fatty acids. This chain is Beta-ketoacyl-[acyl-carrier-protein] synthase III, found in Chlorobaculum tepidum (strain ATCC 49652 / DSM 12025 / NBRC 103806 / TLS) (Chlorobium tepidum).